Here is a 138-residue protein sequence, read N- to C-terminus: Large ribosomal subunit protein uL16c (138 aa).

It belongs to the universal ribosomal protein uL16 family. As to quaternary structure, part of the 50S ribosomal subunit.

It localises to the plastid. It is found in the chloroplast. This chain is Large ribosomal subunit protein uL16c, found in Tetradesmus obliquus (Green alga).